The following is a 274-amino-acid chain: Energy-coupling factor transporter ATP-binding protein EcfA1 (274 aa).

The 235-residue stretch at I11–D245 folds into the ABC transporter domain. G45 to S52 serves as a coordination point for ATP.

It belongs to the ABC transporter superfamily. Energy-coupling factor EcfA family. In terms of assembly, forms a stable energy-coupling factor (ECF) transporter complex composed of 2 membrane-embedded substrate-binding proteins (S component), 2 ATP-binding proteins (A component) and 2 transmembrane proteins (T component).

Its subcellular location is the cell membrane. Its function is as follows. ATP-binding (A) component of a common energy-coupling factor (ECF) ABC-transporter complex. Unlike classic ABC transporters this ECF transporter provides the energy necessary to transport a number of different substrates. The polypeptide is Energy-coupling factor transporter ATP-binding protein EcfA1 (Mycoplasma mobile (strain ATCC 43663 / 163K / NCTC 11711) (Mesomycoplasma mobile)).